We begin with the raw amino-acid sequence, 148 residues long: Large ribosomal subunit protein bL9 (148 aa).

Belongs to the bacterial ribosomal protein bL9 family.

Binds to the 23S rRNA. This Pseudomonas savastanoi pv. phaseolicola (strain 1448A / Race 6) (Pseudomonas syringae pv. phaseolicola (strain 1448A / Race 6)) protein is Large ribosomal subunit protein bL9.